We begin with the raw amino-acid sequence, 61 residues long: Tryptophyllin-1 (61 aa).

Residues 1-22 form the signal peptide; the sequence is MDILKKSLFLALFLGLVSISFC. Residues 23-53 constitute a propeptide that is removed on maturation; that stretch reads DEEKRQDDDESNESEEKKEIHEEGSQEERRE. Positions 24–61 are disordered; sequence EEKRQDDDESNESEEKKEIHEEGSQEERREKPPPWVPV. Residues 36–55 are compositionally biased toward basic and acidic residues; the sequence is SEEKKEIHEEGSQEERREKP.

As to expression, expressed by the skin glands.

Its subcellular location is the secreted. Functionally, the synthetic peptide inhibits bradykinin-induced relaxation of rat tail artery smooth muscle, and also has anti-proliferative effects on the human prostate cancer cell lines LNCaP, PC3 and DU145. The protein is Tryptophyllin-1 of Phyllomedusa sauvagei (Sauvage's leaf frog).